The primary structure comprises 411 residues: Protein DDI1 homolog 2 (411 aa).

One can recognise a Ubiquitin-like domain in the interval 1–81 (MLLTVFCAPR…LVLRQAERLR (81 aa)). Residues 82–144 (APPQPTVPGL…SGVSPQGLDN (63 aa)) are disordered. A compositionally biased stretch (low complexity) spans 108–121 (QNRNRPQQAQRPST). Residue aspartate 262 is part of the active site. The Ubiquitin-binding motif lies at 387–406 (DEIADRELAEAIQRSVQDSG).

Belongs to the DDI1 family. In terms of assembly, homodimer.

The protein localises to the cytoplasm. Its subcellular location is the cytosol. The protein resides in the chromosome. In terms of biological role, aspartic protease that mediates the cleavage of NFE2L1/NRF1 at 'Leu-104', thereby promoting release of NFE2L1/NRF1 from the endoplasmic reticulum membrane. Ubiquitination of NFE2L1/NRF1 is a prerequisite for cleavage, suggesting that DDI2 specifically recognizes and binds ubiquitinated NFE2L1/NRF1. Seems to act as a proteasomal shuttle which links the proteasome and replication fork proteins like RTF2. Required for cellular survival following replication stress. The chain is Protein DDI1 homolog 2 (ddi2) from Danio rerio (Zebrafish).